Here is a 726-residue protein sequence, read N- to C-terminus: Myb-like protein Z (726 aa).

Disordered regions lie at residues 15 to 109 (DSND…SLSN), 124 to 149 (ASPSKSSENSPTIHTSSLSPNSYHPY), 161 to 239 (HYVS…TKQQ), and 272 to 303 (LIPSSPTRSPSGGSGSESEENDGESSPNNMRS). Residues 18-39 (DNNNNNNNNNNSNNNNNNNNNN) are compositionally biased toward low complexity. A compositionally biased stretch (polar residues) spans 45-80 (SSATSSPTGQDSTIDRPNSPSSSIKFTYPSKNSIVT). Low complexity predominate over residues 81–108 (SPSSLQLPSPSFSSSSSSSSSSSSSSLS). Over residues 124 to 147 (ASPSKSSENSPTIHTSSLSPNSYH) the composition is skewed to polar residues. The segment covering 165–177 (NNNNNNNNNNNNN) has biased composition (low complexity). A compositionally biased stretch (polar residues) spans 183–209 (SSELYNTSPSISSKTTPNGSSTNNSPF). The span at 221 to 239 (NNNNNNNNDRNENNTTKQQ) shows a compositional bias: low complexity. In terms of domain architecture, Myb-like spans 329–388 (IPIATRKLWSQEECCRLLEMVFQRDPQSVTSKESELRWRSIASTLGRTVTSTRKKYMRLM). A compositionally biased stretch (low complexity) spans 516–651 (KQIQQQQKQK…NNNYRSSLSP (136 aa)). Positions 516-726 (KQIQQQQKQK…NNNNYNNYHN (211 aa)) are disordered. The span at 661 to 675 (QSPQQKSNNENQQNF) shows a compositional bias: polar residues. Residues 709–726 (NLNNNNNNNNNNYNNYHN) show a composition bias toward low complexity.

This Dictyostelium discoideum (Social amoeba) protein is Myb-like protein Z (mybZ).